The primary structure comprises 552 residues: Probable protein kinase UbiB (552 aa).

Residues 121-504 (HFDTVPLASA…QGLQRRVVNA (384 aa)) form the Protein kinase domain. ATP is bound by residues 127 to 135 (LASASISQV) and K149. The Proton acceptor role is filled by D284. The next 2 membrane-spanning stretches (helical) occupy residues 501 to 521 (VVNA…YGLH) and 530 to 550 (IPVW…SAWW).

This sequence belongs to the ABC1 family. UbiB subfamily.

The protein resides in the cell inner membrane. It participates in cofactor biosynthesis; ubiquinone biosynthesis [regulation]. Its function is as follows. Is probably a protein kinase regulator of UbiI activity which is involved in aerobic coenzyme Q (ubiquinone) biosynthesis. The polypeptide is Probable protein kinase UbiB (Xylella fastidiosa (strain M12)).